We begin with the raw amino-acid sequence, 343 residues long: Phosphoribosylformylglycinamidine cyclo-ligase (343 aa).

The protein belongs to the AIR synthase family.

It localises to the cytoplasm. The catalysed reaction is 2-formamido-N(1)-(5-O-phospho-beta-D-ribosyl)acetamidine + ATP = 5-amino-1-(5-phospho-beta-D-ribosyl)imidazole + ADP + phosphate + H(+). Its pathway is purine metabolism; IMP biosynthesis via de novo pathway; 5-amino-1-(5-phospho-D-ribosyl)imidazole from N(2)-formyl-N(1)-(5-phospho-D-ribosyl)glycinamide: step 2/2. The chain is Phosphoribosylformylglycinamidine cyclo-ligase from Staphylococcus epidermidis (strain ATCC 35984 / DSM 28319 / BCRC 17069 / CCUG 31568 / BM 3577 / RP62A).